Here is a 282-residue protein sequence, read N- to C-terminus: 4-diphosphocytidyl-2-C-methyl-D-erythritol kinase (282 aa).

K15 is an active-site residue. 98–108 (PMGGGVGGGSS) serves as a coordination point for ATP. The active site involves D140.

This sequence belongs to the GHMP kinase family. IspE subfamily.

It catalyses the reaction 4-CDP-2-C-methyl-D-erythritol + ATP = 4-CDP-2-C-methyl-D-erythritol 2-phosphate + ADP + H(+). It participates in isoprenoid biosynthesis; isopentenyl diphosphate biosynthesis via DXP pathway; isopentenyl diphosphate from 1-deoxy-D-xylulose 5-phosphate: step 3/6. Its function is as follows. Catalyzes the phosphorylation of the position 2 hydroxy group of 4-diphosphocytidyl-2C-methyl-D-erythritol. In Azoarcus sp. (strain BH72), this protein is 4-diphosphocytidyl-2-C-methyl-D-erythritol kinase.